Reading from the N-terminus, the 385-residue chain is Tumor protein p53-inducible protein 13 (385 aa).

A signal peptide spans 1 to 27 (MVHPPPPPPRLLLVALVGLLSLREVVA). Residues 28–301 (EPAEEAGTPC…ARGPTPRTEE (274 aa)) are Extracellular-facing. The tract at residues 242-297 (APVSLTTGGPGGNGRSRTEAQMPSGQGNHGGCACPGQVSPAPRAAGPPRVARGPTP) is disordered. Residues 281 to 297 (PAPRAAGPPRVARGPTP) are compositionally biased toward low complexity. Residues 302–322 (AAWAAMALTFLLVLLTLATLC) form a helical membrane-spanning segment. At 323 to 385 (TRLHRNFRRS…DSGPDSESSD (63 aa)) the chain is on the cytoplasmic side. Positions 359-369 (SRRIKRSRRRP) are enriched in basic residues. The interval 359–385 (SRRIKRSRRRPLLPPTPDSGPDSESSD) is disordered.

The protein localises to the cell membrane. Its subcellular location is the cytoplasm. Functionally, may act as a tumor suppressor. Inhibits tumor cell growth, when overexpressed. This is Tumor protein p53-inducible protein 13 (Tp53i13) from Mus musculus (Mouse).